We begin with the raw amino-acid sequence, 423 residues long: CinA-like protein (423 aa).

It belongs to the CinA family.

The polypeptide is CinA-like protein (Synechococcus sp. (strain CC9311)).